We begin with the raw amino-acid sequence, 641 residues long: Phosphomethylpyrimidine synthase (641 aa).

Residues Asn221, Met250, Tyr279, His315, 335–337, 376–379, and Glu415 contribute to the substrate site; these read SRG and DGLR. His419 is a Zn(2+) binding site. Residue Tyr442 coordinates substrate. Zn(2+) is bound at residue His483. 3 residues coordinate [4Fe-4S] cluster: Cys563, Cys566, and Cys571.

Belongs to the ThiC family. In terms of assembly, homodimer. The cofactor is [4Fe-4S] cluster.

It carries out the reaction 5-amino-1-(5-phospho-beta-D-ribosyl)imidazole + S-adenosyl-L-methionine = 4-amino-2-methyl-5-(phosphooxymethyl)pyrimidine + CO + 5'-deoxyadenosine + formate + L-methionine + 3 H(+). It participates in cofactor biosynthesis; thiamine diphosphate biosynthesis. Its function is as follows. Catalyzes the synthesis of the hydroxymethylpyrimidine phosphate (HMP-P) moiety of thiamine from aminoimidazole ribotide (AIR) in a radical S-adenosyl-L-methionine (SAM)-dependent reaction. This Rhodopseudomonas palustris (strain BisA53) protein is Phosphomethylpyrimidine synthase.